A 159-amino-acid polypeptide reads, in one-letter code: Ribosomal RNA large subunit methyltransferase H (159 aa).

Residues L76, G108, and 127–132 (FSKMTF) each bind S-adenosyl-L-methionine.

This sequence belongs to the RNA methyltransferase RlmH family. As to quaternary structure, homodimer.

The protein resides in the cytoplasm. It carries out the reaction pseudouridine(1915) in 23S rRNA + S-adenosyl-L-methionine = N(3)-methylpseudouridine(1915) in 23S rRNA + S-adenosyl-L-homocysteine + H(+). Specifically methylates the pseudouridine at position 1915 (m3Psi1915) in 23S rRNA. The sequence is that of Ribosomal RNA large subunit methyltransferase H from Clostridium botulinum (strain 657 / Type Ba4).